The sequence spans 377 residues: 4-hydroxy-3-methylbut-2-en-1-yl diphosphate synthase (flavodoxin) (377 aa).

[4Fe-4S] cluster-binding residues include Cys275, Cys278, Cys310, and Glu317.

It belongs to the IspG family. Requires [4Fe-4S] cluster as cofactor.

It carries out the reaction (2E)-4-hydroxy-3-methylbut-2-enyl diphosphate + oxidized [flavodoxin] + H2O + 2 H(+) = 2-C-methyl-D-erythritol 2,4-cyclic diphosphate + reduced [flavodoxin]. Its pathway is isoprenoid biosynthesis; isopentenyl diphosphate biosynthesis via DXP pathway; isopentenyl diphosphate from 1-deoxy-D-xylulose 5-phosphate: step 5/6. Converts 2C-methyl-D-erythritol 2,4-cyclodiphosphate (ME-2,4cPP) into 1-hydroxy-2-methyl-2-(E)-butenyl 4-diphosphate. This chain is 4-hydroxy-3-methylbut-2-en-1-yl diphosphate synthase (flavodoxin), found in Jannaschia sp. (strain CCS1).